A 452-amino-acid polypeptide reads, in one-letter code: Keratin, type II cytoskeletal 80 (452 aa).

A head region spans residues 1-82; the sequence is MACRSCVVGF…DPAVQQLKNQ (82 aa). S45 is subject to Phosphoserine. Residues 82–118 are coil 1A; the sequence is QEKEEMKALNDKFASLIGKVQALEQRNQLLETRWSFL. Residues 83–394 form the IF rod domain; it reads EKEEMKALND…KLVEGEEGRM (312 aa). Residues 119–135 are linker 1; it reads QGQDSAIFDLGHLYEEY. Positions 136–227 are coil 1B; the sequence is QGRLQEELRK…TIYEQELKDL (92 aa). A linker 12 region spans residues 228-251; the sequence is AAQVKDVSVTVGMDSRCHIDLSGI. The segment at 252–390 is coil 2; the sequence is VEEVKAQYDA…ATYRKLVEGE (139 aa). The tail stretch occupies residues 391–452; it reads EGRMDSPSAT…YFSQESEVSE (62 aa). Residue S396 is modified to Phosphoserine. The interval 412 to 434 is disordered; the sequence is AASRSGLSKAPSRKKKGSKGPVI.

Belongs to the intermediate filament family. As to quaternary structure, heterotetramer of two type I and two type II keratins. As to expression, weakly expressed in tongue, but not skin or in any other tissues or organs examined.

The protein is Keratin, type II cytoskeletal 80 (KRT80) of Homo sapiens (Human).